The sequence spans 634 residues: Sodium-dependent neutral amino acid transporter B(0)AT1 (634 aa).

Residues 1-41 (MVRLVLPNPGLDARIPSLAELETIEQEEASSRPKWDNKAQY) lie on the Cytoplasmic side of the membrane. Position 17 is a phosphoserine (Ser-17). The helical transmembrane segment at 42 to 62 (MLTCLGFCVGLGNVWRFPYLC) threads the bilayer. Residues 63 to 67 (QSHGG) lie on the Extracellular side of the membrane. Residues 68–88 (GAFMIPFLILLVLEGIPLLYL) form a helical membrane-spanning segment. At 89–120 (EFAIGQRLRRGSLGVWSSIHPALKGLGLASML) the chain is on the cytoplasmic side. The helical transmembrane segment at 121–141 (TSFMVGLYYNTIISWIMWYLF) threads the bilayer. Over 142-192 (NSFQEPLPWSDCPLNENQTGYVDECARSSPVDYFWYRETLNISTSISDSGS) the chain is Extracellular. Residues Asn-158 and Asn-182 are each glycosylated (N-linked (GlcNAc...) asparagine). The chain crosses the membrane as a helical span at residues 193–213 (IQWWMLLCLACAWSVLYMCTI). The Cytoplasmic portion of the chain corresponds to 214–221 (RGIETTGK). The helical transmembrane segment at 222–242 (AVYITSTLPYVVLTIFLIRGL) threads the bilayer. Over 243-268 (TLKGATNGIVFLFTPNVTELAQPDTW) the chain is Extracellular. N-linked (GlcNAc...) asparagine glycosylation occurs at Asn-258. A helical membrane pass occupies residues 269 to 289 (LDAGAQVFFSFSLAFGGLISF). The Cytoplasmic segment spans residues 290 to 304 (SSYNSVHNNCEKDSV). Residues 305–325 (IVSIINGFTSVYVAIVVYSVI) form a helical membrane-spanning segment. Topologically, residues 326 to 413 (GFRATQRYDD…TEAITKMPLS (88 aa)) are extracellular. Residues Asn-354 and Asn-368 are each glycosylated (N-linked (GlcNAc...) asparagine). A helical membrane pass occupies residues 414–434 (PLWSVLFFIMLFCLGLSSMFG). The Cytoplasmic portion of the chain corresponds to 435–456 (NMEGVVVPLQDLRVIPPKWPKE). The chain crosses the membrane as a helical span at residues 457–477 (VLTGLICLGTFLIGFIFTLNS). Residues 478-490 (GQYWLSLLDSYAG) are Extracellular-facing. The helical transmembrane segment at 491 to 511 (SIPLLIIAFCEMFSVVYVYGV) threads the bilayer. Topologically, residues 512–531 (DRFNKDIEFMIGHKPNIFWQ) are cytoplasmic. The chain crosses the membrane as a helical span at residues 532–552 (VTWRVVSPLLMLIIFLFFFVV). The Extracellular portion of the chain corresponds to 553-581 (EVSQELTYSIWDPGYEEFPKSQKISYPNW). The chain crosses the membrane as a helical span at residues 582–602 (VYVVVVIVAGVPSLTIPGYAI). Topologically, residues 603–634 (YKLIRNHCQKPGDHQGLVSTLSTASMNGDLKY) are cytoplasmic. Ser-627 bears the Phosphoserine mark.

The protein belongs to the sodium:neurotransmitter symporter (SNF) (TC 2.A.22) family. SLC6A19 subfamily. As to quaternary structure, interacts in a tissue-specific manner with ACE2 in small intestine and with CLTRN in the kidney. Interacts with CLTRN; this interaction is required for trafficking of SLC6A19 to the plasma membrane and for its catalytic activation in kidneys. Interacts with ACE2; this interaction is required for trafficking of SLC6A19 to the plasma membrane and for its catalytic activation in intestine. Interacts with ANPEP; the interaction positively regulates its amino acid transporter activity. In terms of tissue distribution, robust expression in kidney and small intestine, with minimal expression in pancreas. Also expressed in stomach, liver, duodenum, ileocecum, colon and prostate. Not detected in testis, whole brain, cerebellum, fetal liver, spleen, skeletal muscle, uterus, heart or lung.

The protein localises to the cell membrane. It localises to the apical cell membrane. It catalyses the reaction L-alanine(in) + Na(+)(in) = L-alanine(out) + Na(+)(out). The catalysed reaction is L-cysteine(in) + Na(+)(in) = L-cysteine(out) + Na(+)(out). It carries out the reaction L-glutamine(in) + Na(+)(in) = L-glutamine(out) + Na(+)(out). The enzyme catalyses glycine(in) + Na(+)(in) = glycine(out) + Na(+)(out). It catalyses the reaction L-isoleucine(in) + Na(+)(in) = L-isoleucine(out) + Na(+)(out). The catalysed reaction is L-leucine(in) + Na(+)(in) = L-leucine(out) + Na(+)(out). It carries out the reaction L-methionine(in) + Na(+)(in) = L-methionine(out) + Na(+)(out). The enzyme catalyses L-phenylalanine(in) + Na(+)(in) = L-phenylalanine(out) + Na(+)(out). It catalyses the reaction L-serine(in) + Na(+)(in) = L-serine(out) + Na(+)(out). The catalysed reaction is L-tryptophan(in) + Na(+)(in) = L-tryptophan(out) + Na(+)(out). It carries out the reaction L-tyrosine(in) + Na(+)(in) = L-tyrosine(out) + Na(+)(out). The enzyme catalyses L-valine(in) + Na(+)(in) = L-valine(out) + Na(+)(out). In terms of biological role, transporter that mediates resorption of neutral amino acids across the apical membrane of renal and intestinal epithelial cells. This uptake is sodium-dependent and chloride-independent. Requires CLTRN in kidney or ACE2 in intestine for cell surface expression and amino acid transporter activity. The protein is Sodium-dependent neutral amino acid transporter B(0)AT1 (SLC6A19) of Homo sapiens (Human).